Consider the following 72-residue polypeptide: Cell division protein ZapB (72 aa).

A coiled-coil region spans residues 5–71; sequence ILDQLEEKIK…LRSLLGQIDN (67 aa).

This sequence belongs to the ZapB family. As to quaternary structure, homodimer. The ends of the coiled-coil dimer bind to each other, forming polymers. Interacts with FtsZ.

It is found in the cytoplasm. Non-essential, abundant cell division factor that is required for proper Z-ring formation. It is recruited early to the divisome by direct interaction with FtsZ, stimulating Z-ring assembly and thereby promoting cell division earlier in the cell cycle. Its recruitment to the Z-ring requires functional FtsA or ZipA. The sequence is that of Cell division protein ZapB from Actinobacillus pleuropneumoniae serotype 5b (strain L20).